A 134-amino-acid chain; its full sequence is Profilin-3 (134 aa).

An intrachain disulfide couples Cys13 to Cys118. The Involved in PIP2 interaction motif lies at Ala84–Thr100. Residue Thr114 is modified to Phosphothreonine.

Belongs to the profilin family. As to quaternary structure, occurs in many kinds of cells as a complex with monomeric actin in a 1:1 ratio. Post-translationally, phosphorylated by MAP kinases.

The protein resides in the cytoplasm. The protein localises to the cytoskeleton. In terms of biological role, binds to actin and affects the structure of the cytoskeleton. At high concentrations, profilin prevents the polymerization of actin, whereas it enhances it at low concentrations. This is Profilin-3 from Olea europaea (Common olive).